The following is a 290-amino-acid chain: Porphobilinogen deaminase (290 aa).

Position 238 is an S-(dipyrrolylmethanemethyl)cysteine (Cys238).

Belongs to the HMBS family. As to quaternary structure, monomer. The cofactor is dipyrromethane.

It catalyses the reaction 4 porphobilinogen + H2O = hydroxymethylbilane + 4 NH4(+). Its pathway is porphyrin-containing compound metabolism; protoporphyrin-IX biosynthesis; coproporphyrinogen-III from 5-aminolevulinate: step 2/4. Functionally, tetrapolymerization of the monopyrrole PBG into the hydroxymethylbilane pre-uroporphyrinogen in several discrete steps. This Caldicellulosiruptor saccharolyticus (strain ATCC 43494 / DSM 8903 / Tp8T 6331) protein is Porphobilinogen deaminase.